A 313-amino-acid chain; its full sequence is uncharacterized protein (313 aa).

The next 3 membrane-spanning stretches (helical) occupy residues 19 to 41 (GLAVAIALITAIAWFPDGLAGFL), 51 to 68 (AIIGAILTILGLSIIFFL), and 81 to 103 (IAEFGFIVLTLIFSLIVFNDFAI).

The protein resides in the cell membrane. This is an uncharacterized protein from Aquifex aeolicus (strain VF5).